The following is a 66-amino-acid chain: Putative ankyrin repeat protein RF_pd14 (66 aa).

The ANK repeat unit spans residues 14–66 (KLNQKLMRAAATGDIEAVQKLVLRGADIYCRDHQGDTALSLAAGSGYLDILDI).

This Rickettsia felis (strain ATCC VR-1525 / URRWXCal2) (Rickettsia azadi) protein is Putative ankyrin repeat protein RF_pd14.